We begin with the raw amino-acid sequence, 752 residues long: Photosystem I P700 chlorophyll a apoprotein A1 (752 aa).

The next 8 helical transmembrane spans lie at 73-96 (IFSAHFGQLAVIFLWISGMHFHGA), 159-182 (LYWIAIGGLIMSALMLFAGWFHYH), 198-222 (MNHHLAGLLGLGCLSWSGHQIHIAL), 294-312 (IAHHHLALSVLFIFAGHMY), 349-372 (WHAQLAINLAMMGSLSIIVAHHMY), 388-414 (LSLFTHHMWIGGFCVVGGAAHGAIFMV), 436-458 (AIISHLNWVCIFLGCHSFGLYIH), and 533-551 (FMVHHIHAFTIHVTVLILL). [4Fe-4S] cluster-binding residues include C575 and C584. Transmembrane regions (helical) follow at residues 591–612 (HVFLGLFWMYNSISVVIFHFSW) and 666–688 (SSAYGLIFLGAHFIWAFSLMFLF). H677 is a binding site for chlorophyll a'. Residues M685 and Y693 each coordinate chlorophyll a. Residue W694 coordinates phylloquinone. The helical transmembrane segment at 726-746 (AVGLAHYLLGGIGTTWSFFLA) threads the bilayer.

It belongs to the PsaA/PsaB family. In terms of assembly, the PsaA/B heterodimer binds the P700 chlorophyll special pair and subsequent electron acceptors. PSI consists of a core antenna complex that captures photons, and an electron transfer chain that converts photonic excitation into a charge separation. The eukaryotic PSI reaction center is composed of at least 11 subunits. It depends on P700 is a chlorophyll a/chlorophyll a' dimer, A0 is one or more chlorophyll a, A1 is one or both phylloquinones and FX is a shared 4Fe-4S iron-sulfur center. as a cofactor.

The protein localises to the plastid. Its subcellular location is the chloroplast thylakoid membrane. The enzyme catalyses reduced [plastocyanin] + hnu + oxidized [2Fe-2S]-[ferredoxin] = oxidized [plastocyanin] + reduced [2Fe-2S]-[ferredoxin]. PsaA and PsaB bind P700, the primary electron donor of photosystem I (PSI), as well as the electron acceptors A0, A1 and FX. PSI is a plastocyanin/cytochrome c6-ferredoxin oxidoreductase, converting photonic excitation into a charge separation, which transfers an electron from the donor P700 chlorophyll pair to the spectroscopically characterized acceptors A0, A1, FX, FA and FB in turn. Oxidized P700 is reduced on the lumenal side of the thylakoid membrane by plastocyanin or cytochrome c6. The protein is Photosystem I P700 chlorophyll a apoprotein A1 of Trieres chinensis (Marine centric diatom).